Here is a 252-residue protein sequence, read N- to C-terminus: CLAVATA3/ESR (CLE)-related protein 4A-2 (252 aa).

Residues 1–21 (MAKNAMLCLLILRVVLALAFA) form the signal peptide. The tract at residues 21 to 83 (ATNKKGDEEP…SNQLPNNNWM (63 aa)) is required for secretion from the host cytoplasm to the host apoplasm. Asparagine 32 carries N-linked (GlcNAc...) asparagine glycosylation. The tract at residues 116-252 (RKTGMHSQRH…APAGPDPIHH (137 aa)) is disordered. Basic and acidic residues-rich tracts occupy residues 125-137 (HHEETTLEQEKRV), 144-179 (PIHHQDTTLEQEKRAVPAGPDPKHHEETTLEQEKRV), 186-200 (PIHHQDTTLEQEKRA), and 207-242 (PTHHEETTLEQEKRAVPAGPDPKHHEETTFEQEKRG). One copy of the A-1 repeat lies at 127 to 135 (EETTLEQEK). A 6 X approximate repeat A region spans residues 127–219 (EETTLEQEKR…HEETTLEQEK (93 aa)). The CLE-1 repeat unit spans residues 136-147 (RVAGAGPDPIHH). The segment at 136 to 252 (RVAGAGPDPI…APAGPDPIHH (117 aa)) is 6 X approximate repeat CLE. Residues 148–156 (QDTTLEQEK) form an A-2 repeat. The CLE-2 repeat unit spans residues 157–168 (RAVPAGPDPKHH). The stretch at 169-177 (EETTLEQEK) is one A-3 repeat. The CLE-3 repeat unit spans residues 178 to 189 (RVAGAGPDPIHH). An A-4 repeat occupies 190 to 198 (QDTTLEQEK). One copy of the CLE-4 repeat lies at 199-210 (RAVPAGPDPTHH). An A-5 repeat occupies 211–219 (EETTLEQEK). The stretch at 220–231 (RAVPAGPDPKHH) is one CLE-5 repeat. One copy of the A-6 repeat lies at 232–240 (EETTFEQEK). One copy of the CLE-6 repeat lies at 241–252 (RGAPAGPDPIHH).

This sequence belongs to the CLV3/ESR signal peptide family. In terms of tissue distribution, highly expressed exclusively within the dorsal esophageal gland cell during syncytium formation in host plants.

It is found in the secreted. The protein localises to the host cytoplasm. The protein resides in the host extracellular space. It localises to the extracellular space. Its subcellular location is the apoplast. Functionally, mimics host plant CLE extracellular signal peptides that regulate cell fate. May play a role in the differentiation or division of feeding cells (syncytia) induced in plant roots during infection. This Globodera rostochiensis (Golden nematode worm) protein is CLAVATA3/ESR (CLE)-related protein 4A-2 (CLE-4A-2).